The primary structure comprises 267 residues: uncharacterized protein (267 aa).

A coiled-coil region spans residues 37–62 (DSSNNYKKKYKKYKRKYIDLKKQLNY).

This is an uncharacterized protein from Acanthamoeba polyphaga (Amoeba).